A 321-amino-acid chain; its full sequence is Mechanosensory protein 3 (321 aa).

LIM zinc-binding domains lie at 27–86 (NKCN…DHSI) and 87–152 (HRCA…QMDD). Residues 217–276 (RRGPRTTIKQNQLDVLNEMFSNTPKPSKHARAKLALETGLSMRVIQVWFQNRRSKERRLK) constitute a DNA-binding region (homeobox).

Interacts with unc-86; the heterooligomer binds to the promoters of mec-3, mec-4 and mec-7. In terms of tissue distribution, expressed in the mechanosensory neurons ALML, ALMR, PLML, PLMR, AVM and PVM, and the FLPL and FLPR neurons.

The protein resides in the nucleus. Its function is as follows. Transcription factor. Specifies differentiation of the set of six touch receptor neurons (TRNs). May positively modulate expression of both its own gene and also of homeobox ARX homolog alr-1 in TRNs, forming a positive feedback loop with alr-1, thereby restricting the variability of expression of mec-3. Required to determine the identity of ALM sensory neurons, acting by interacting with unc-86, thereby preventing unc-86 cooperating with pag-3 to induce BDU-neuron specific genes. Binds cooperatively as a heterodimer with unc-86 to sites in the mec-3 gene promoter. Promotes outgrowth of lateral dendritic branches on the PVD nociceptive neurons, probably acting both directly, and upstream of zinc finger protein egl-46. The polypeptide is Mechanosensory protein 3 (mec-3) (Caenorhabditis elegans).